The following is a 108-amino-acid chain: CDGSH iron-sulfur domain-containing protein 1 (108 aa).

A helical; Signal-anchor for type III membrane protein membrane pass occupies residues 13–31; sequence WIAAVTFAAGTAALGYLAY. At 32–108 the chain is on the cytoplasmic side; that stretch reads KKFYAKESRT…GPLIIKKKET (77 aa). A Glycyl lysine isopeptide (Lys-Gly) (interchain with G-Cter in ubiquitin) cross-link involves residue lysine 42. Lysine 55 acts as the Schiff-base intermediate with pyridoxal 5'-phosphate in catalysis. Lysine 55 and lysine 68 each carry N6-acetyllysine; alternate. Glycyl lysine isopeptide (Lys-Gly) (interchain with G-Cter in ubiquitin); alternate cross-links involve residues lysine 55 and lysine 68. Residues cysteine 72 and cysteine 74 each contribute to the [2Fe-2S] cluster site. Residues lysine 78 and lysine 79 each participate in a glycyl lysine isopeptide (Lys-Gly) (interchain with G-Cter in ubiquitin) cross-link. Residues cysteine 83 and histidine 87 each contribute to the [2Fe-2S] cluster site. A Glycyl lysine isopeptide (Lys-Gly) (interchain with G-Cter in ubiquitin) cross-link involves residue lysine 89. N6-acetyllysine; alternate is present on lysine 104. Residue lysine 104 forms a Glycyl lysine isopeptide (Lys-Gly) (interchain with G-Cter in ubiquitin); alternate linkage. Glycyl lysine isopeptide (Lys-Gly) (interchain with G-Cter in ubiquitin) cross-links involve residues lysine 105 and lysine 106.

It belongs to the CISD protein family. In terms of assembly, homodimer. The cofactor is [2Fe-2S] cluster. Requires pyridoxal 5'-phosphate as cofactor. Post-translationally, ubiquitinated by PRKN during mitophagy, leading to its degradation and enhancement of mitophagy. Deubiquitinated by USP30.

The protein localises to the mitochondrion outer membrane. It carries out the reaction L-cysteine + 2-oxoglutarate = 2-oxo-3-sulfanylpropanoate + L-glutamate. In terms of biological role, L-cysteine transaminase that catalyzes the reversible transfer of the amino group from L-cysteine to the alpha-keto acid 2-oxoglutarate to respectively form 2-oxo-3-sulfanylpropanoate and L-glutamate. The catalytic cycle occurs in the presence of pyridoxal 5'-phosphate (PLP) cofactor that facilitates transamination by initially forming an internal aldimine with the epsilon-amino group of active site Lys-55 residue on the enzyme (PLP-enzyme aldimine), subsequently displaced by formation of an external aldimine with the substrate amino group (PLP-L-cysteine aldimine). The external aldimine is further deprotonated to form a carbanion intermediate, which in the presence of 2-oxoglutarate regenerates PLP yielding final products 2-oxo-3-sulfanylpropanoate and L-glutamate. The proton transfer in carbanion intermediate is suggested to be controlled by the active site lysine residue, whereas PLP stabilizes carbanion structure through electron delocalization, also known as the electron sink effect. Plays a key role in regulating maximal capacity for electron transport and oxidative phosphorylation. May be involved in iron-sulfur cluster shuttling and/or in redox reactions. Can transfer the [2Fe-2S] cluster to an apo-acceptor protein only when in the oxidation state, likely serving as a redox sensor that regulates mitochondrial iron-sulfur cluster assembly and iron trafficking upon oxidative stress. This is CDGSH iron-sulfur domain-containing protein 1 (Cisd1) from Rattus norvegicus (Rat).